We begin with the raw amino-acid sequence, 386 residues long: 5-hydroxytryptamine receptor 1B (386 aa).

The disordered stretch occupies residues 1-25 (MEEPGARCAPPPPAGSQTQTPSSNL). The Extracellular segment spans residues 1-42 (MEEPGARCAPPPPAGSQTQTPSSNLSHNCSADSYIYQDSIAL). Positions 16-25 (SQTQTPSSNL) are enriched in polar residues. N-linked (GlcNAc...) asparagine glycosylation is found at asparagine 24 and asparagine 28. A helical transmembrane segment spans residues 43–68 (PWKVLLVALLALITLATTLSNAFVIA). Residues 69–82 (TVYRTRKLHTPANY) are Cytoplasmic-facing. Residues 83-107 (LIASLAVTDLLVSILVMPISTMYTV) form a helical membrane-spanning segment. At 108 to 115 (TGRWTLGQ) the chain is on the extracellular side. A helical transmembrane segment spans residues 116–141 (VVCDFWLSSDITCCTASIMHLCVIAL). An intrachain disulfide couples cysteine 118 to cysteine 195. Aspartate 125 and threonine 130 together coordinate ergotamine. Positions 142–144 (DRY) match the DRY motif; important for ligand-induced conformation changes and signaling motif. Residues 142-161 (DRYWAITDAVEYSAKRTPRR) are Cytoplasmic-facing. A helical membrane pass occupies residues 162-180 (AAVMIALVWVFSISISLPR). Over 181–201 (FFWRQAKAEEEVLDCLVNTDH) the chain is Extracellular. Residue valine 197 participates in ergotamine binding. Residues 202 to 225 (VLYTVYSTVGAFYLPTLLLIALYG) form a helical membrane-spanning segment. At 226-311 (RIYVEARSRI…AARERKATKT (86 aa)) the chain is on the cytoplasmic side. Residues 253-272 (ISDSPGSTSSVTSINSRVPD) form a disordered region. Positions 254–268 (SDSPGSTSSVTSINS) are enriched in low complexity. Residues 312–333 (LGIILGAFIVCWLPFFIISLVM) form a helical membrane-spanning segment. Residues 334–343 (PICKDACWFH) are Extracellular-facing. A helical transmembrane segment spans residues 344–366 (MAIFDFFNWLGYLNSLINPIIYT). Residues 361–365 (NPIIY) carry the NPxxY motif; important for ligand-induced conformation changes and signaling motif. Topologically, residues 367-386 (MPNEDFKQAFHKLIRFKCTG) are cytoplasmic. Cysteine 384 carries the S-palmitoyl cysteine lipid modification.

The protein belongs to the G-protein coupled receptor 1 family. As to quaternary structure, homodimer. Heterodimer with HTR1D. Post-translationally, phosphorylated. Desensitization of the receptor may be mediated by its phosphorylation. In terms of processing, palmitoylated.

It is found in the cell membrane. Functionally, G-protein coupled receptor for 5-hydroxytryptamine (serotonin). Also functions as a receptor for ergot alkaloid derivatives, various anxiolytic and antidepressant drugs and other psychoactive substances, such as lysergic acid diethylamide (LSD). Ligand binding causes a conformation change that triggers signaling via guanine nucleotide-binding proteins (G proteins) and modulates the activity of downstream effectors, such as adenylate cyclase. HTR1B is coupled to G(i)/G(o) G alpha proteins and mediates inhibitory neurotransmission by inhibiting adenylate cyclase activity. Arrestin family members inhibit signaling via G proteins and mediate activation of alternative signaling pathways. Regulates the release of 5-hydroxytryptamine, dopamine and acetylcholine in the brain, and thereby affects neural activity, nociceptive processing, pain perception, mood and behavior. Besides, plays a role in vasoconstriction of cerebral arteries. This is 5-hydroxytryptamine receptor 1B (HTR1B) from Spalax ehrenbergi (Middle East blind mole rat).